We begin with the raw amino-acid sequence, 259 residues long: Phosphatidylserine decarboxylase proenzyme (259 aa).

Ser183 functions as the Schiff-base intermediate with substrate; via pyruvic acid in the catalytic mechanism. Ser183 bears the Pyruvic acid (Ser); by autocatalysis mark.

This sequence belongs to the phosphatidylserine decarboxylase family. PSD-A subfamily. As to quaternary structure, heterodimer of a large membrane-associated beta subunit and a small pyruvoyl-containing alpha subunit. Pyruvate serves as cofactor. Post-translationally, is synthesized initially as an inactive proenzyme. Formation of the active enzyme involves a self-maturation process in which the active site pyruvoyl group is generated from an internal serine residue via an autocatalytic post-translational modification. Two non-identical subunits are generated from the proenzyme in this reaction, and the pyruvate is formed at the N-terminus of the alpha chain, which is derived from the carboxyl end of the proenzyme. The post-translation cleavage follows an unusual pathway, termed non-hydrolytic serinolysis, in which the side chain hydroxyl group of the serine supplies its oxygen atom to form the C-terminus of the beta chain, while the remainder of the serine residue undergoes an oxidative deamination to produce ammonia and the pyruvoyl prosthetic group on the alpha chain.

It localises to the cell membrane. It carries out the reaction a 1,2-diacyl-sn-glycero-3-phospho-L-serine + H(+) = a 1,2-diacyl-sn-glycero-3-phosphoethanolamine + CO2. The protein operates within phospholipid metabolism; phosphatidylethanolamine biosynthesis; phosphatidylethanolamine from CDP-diacylglycerol: step 2/2. Its function is as follows. Catalyzes the formation of phosphatidylethanolamine (PtdEtn) from phosphatidylserine (PtdSer). The protein is Phosphatidylserine decarboxylase proenzyme of Neisseria gonorrhoeae (strain NCCP11945).